We begin with the raw amino-acid sequence, 145 residues long: Peptidyl-prolyl cis-trans isomerase (145 aa).

Positions 1–145 (MTQAILETEK…LSVKIVTDAA (145 aa)) constitute a PPIase cyclophilin-type domain.

Belongs to the cyclophilin-type PPIase family.

It carries out the reaction [protein]-peptidylproline (omega=180) = [protein]-peptidylproline (omega=0). Functionally, PPIases accelerate the folding of proteins. It catalyzes the cis-trans isomerization of proline imidic peptide bonds in oligopeptides. The polypeptide is Peptidyl-prolyl cis-trans isomerase (rot) (Synechococcus elongatus (strain ATCC 33912 / PCC 7942 / FACHB-805) (Anacystis nidulans R2)).